A 502-amino-acid chain; its full sequence is ATP synthase subunit alpha (502 aa).

Residue 169 to 176 (GDRQTGKT) participates in ATP binding.

Belongs to the ATPase alpha/beta chains family. In terms of assembly, F-type ATPases have 2 components, CF(1) - the catalytic core - and CF(0) - the membrane proton channel. CF(1) has five subunits: alpha(3), beta(3), gamma(1), delta(1), epsilon(1). CF(0) has three main subunits: a(1), b(2) and c(9-12). The alpha and beta chains form an alternating ring which encloses part of the gamma chain. CF(1) is attached to CF(0) by a central stalk formed by the gamma and epsilon chains, while a peripheral stalk is formed by the delta and b chains.

The protein localises to the cell membrane. The enzyme catalyses ATP + H2O + 4 H(+)(in) = ADP + phosphate + 5 H(+)(out). Its function is as follows. Produces ATP from ADP in the presence of a proton gradient across the membrane. The alpha chain is a regulatory subunit. The protein is ATP synthase subunit alpha of Streptococcus pyogenes serotype M12 (strain MGAS9429).